Reading from the N-terminus, the 444-residue chain is Tol-Pal system protein TolB (444 aa).

The N-terminal stretch at 1–19 (MRNIIYFILSLLFSFKGYA) is a signal peptide.

The protein belongs to the TolB family. In terms of assembly, the Tol-Pal system is composed of five core proteins: the inner membrane proteins TolA, TolQ and TolR, the periplasmic protein TolB and the outer membrane protein Pal. They form a network linking the inner and outer membranes and the peptidoglycan layer.

It is found in the periplasm. Part of the Tol-Pal system, which plays a role in outer membrane invagination during cell division and is important for maintaining outer membrane integrity. The protein is Tol-Pal system protein TolB of Rickettsia felis (strain ATCC VR-1525 / URRWXCal2) (Rickettsia azadi).